We begin with the raw amino-acid sequence, 362 residues long: S-adenosylmethionine decarboxylase proenzyme (362 aa).

Residues Glu-11 and Glu-14 contribute to the active site. Ser-71 acts as the Schiff-base intermediate with substrate; via pyruvic acid in catalysis. The residue at position 71 (Ser-71) is a Pyruvic acid (Ser); by autocatalysis. Residue Cys-85 is the Proton donor; for catalytic activity of the active site. Catalysis depends on proton acceptor; for processing activity residues Ser-234 and His-247.

This sequence belongs to the eukaryotic AdoMetDC family. Pyruvate serves as cofactor. Is synthesized initially as an inactive proenzyme. Formation of the active enzyme involves a self-maturation process in which the active site pyruvoyl group is generated from an internal serine residue via an autocatalytic post-translational modification. Two non-identical subunits are generated from the proenzyme in this reaction, and the pyruvate is formed at the N-terminus of the alpha chain, which is derived from the carboxyl end of the proenzyme. The post-translation cleavage follows an unusual pathway, termed non-hydrolytic serinolysis, in which the side chain hydroxyl group of the serine supplies its oxygen atom to form the C-terminus of the beta chain, while the remainder of the serine residue undergoes an oxidative deamination to produce ammonia and the pyruvoyl group blocking the N-terminus of the alpha chain.

The catalysed reaction is S-adenosyl-L-methionine + H(+) = S-adenosyl 3-(methylsulfanyl)propylamine + CO2. It functions in the pathway amine and polyamine biosynthesis; S-adenosylmethioninamine biosynthesis; S-adenosylmethioninamine from S-adenosyl-L-methionine: step 1/1. This chain is S-adenosylmethionine decarboxylase proenzyme (SAMDC), found in Ipomoea nil (Japanese morning glory).